The following is a 3993-amino-acid chain: Intermembrane lipid transfer protein VPS13B (3993 aa).

The Chorein N-terminal domain maps to 2–102; that stretch reads LESYVTPILM…KDGIQDDHES (101 aa). Residues 100-133 are disordered; it reads HESCGSNSTNRSTAENTKSSIKPRRIQQAAPADP. A compositionally biased stretch (polar residues) spans 103-119; that stretch reads CGSNSTNRSTAENTKSS. 4 positions are modified to phosphoserine: S413, S998, S1001, and S1032. Disordered regions lie at residues 1262–1303, 1616–1637, and 1735–1770; these read SPVW…PFSD, DQLKPEKGSGSGGVPTESERNS, and TKATEISKQEQKKVDTFDGGTAETSSRYSGAQDSGI. The span at 1264–1291 shows a compositional bias: polar residues; sequence VWSSVGTAPPDTSTCSPSADIGTTTEGD. Residues 1739-1750 are compositionally biased toward basic and acidic residues; sequence EISKQEQKKVDT. Residues 1756 to 1770 show a composition bias toward polar residues; sequence AETSSRYSGAQDSGI. A Phosphoserine modification is found at S1789. The disordered stretch occupies residues 2048 to 2067; sequence HSSAHSKETSTPSDSILNMD. Residues 2604 to 2683 enclose the SHR-BD domain; it reads HFVICNDTQE…TIQYKGRTAS (80 aa). The segment at 3880–3993 is localizes the protein to the Golgi apparatus; it reads AFPITEISCA…KNKALRKGFS (114 aa).

The protein belongs to the VPS13 family. Interacts with STX6. Interacts with STX12 (via N-terminus). Interacts with RAB6A isoform 1 (GTP-bound) and isoform 2 (GTP-bound). Interacts with RAB6B (GTP-bound). In terms of tissue distribution, ubiquitously expressed in all examined tissues.

Its subcellular location is the recycling endosome membrane. It is found in the cytoplasmic vesicle. The protein localises to the secretory vesicle. It localises to the acrosome membrane. The protein resides in the golgi apparatus. Its subcellular location is the cis-Golgi network membrane. It is found in the endoplasmic reticulum-Golgi intermediate compartment membrane. The protein localises to the trans-Golgi network membrane. It localises to the early endosome membrane. The protein resides in the lysosome membrane. In terms of biological role, mediates the transfer of lipids between membranes at organelle contact sites. Binds phosphatidylinositol 3-phosphate. Functions as a tethering factor in the slow endocytic recycling pathway, to assist traffic between early and recycling endosomes. Involved in the transport of proacrosomal vesicles to the nuclear dense lamina (NDL) during spermatid development. Plays a role in the assembly of the Golgi apparatus, possibly by mediating trafficking to the Golgi membrane. Plays a role in the development of the nervous system, and may be required for neuron projection development. May also play a role during adipose tissue development. Required for maintenance of the ocular lens. Required for proper organization of the Golgi. This is Intermembrane lipid transfer protein VPS13B from Mus musculus (Mouse).